The primary structure comprises 300 residues: uncharacterized protein (300 aa).

Residues 1–7 are Periplasmic-facing; it reads MGSTRKG. Residues 8–28 traverse the membrane as a helical segment; the sequence is MLNVLIAAVLWGSSGVCAQYI. One can recognise an EamA 1 domain in the interval 16 to 145; it reads VLWGSSGVCA…SLIGTFLLVT (130 aa). Residues 29 to 45 lie on the Cytoplasmic side of the membrane; the sequence is MEQSRMSSQFLTMIRLL. A helical transmembrane segment spans residues 46–66; it reads FAGLILVTFSFMHGDKIFSIL. Residues 67-71 lie on the Periplasmic side of the membrane; that stretch reads KNRKD. The helical transmembrane segment at 72–92 threads the bilayer; sequence ALSLLIFSVVGALTVQLTFLL. The Cytoplasmic segment spans residues 93 to 99; it reads TIEKSNA. The helical transmembrane segment at 100–120 threads the bilayer; the sequence is ATATVLQFLSPTIIVAWFALA. At 121–124 the chain is on the periplasmic side; the sequence is RRTR. A helical transmembrane segment spans residues 125 to 145; it reads PGILVLTAILTSLIGTFLLVT. Over 146-151 the chain is Cytoplasmic; that stretch reads HGNPTS. A helical membrane pass occupies residues 152–172; the sequence is LSISSAALFWGIASAFAAAFY. The region spanning 167–291 is the EamA 2 domain; it reads FAAAFYTTWP…ILSSVILISL (125 aa). At 173–184 the chain is on the periplasmic side; that stretch reads TTWPSRLIAQYG. Residues 185–205 form a helical membrane-spanning segment; the sequence is TLPVVGWSMSFGGLILLPFYA. Residues 206 to 216 lie on the Cytoplasmic side of the membrane; the sequence is KEGTHFAVSGS. The chain crosses the membrane as a helical span at residues 217–237; it reads LILAFFYLVVIGTSLTFSLYL. Residues 238-263 are Periplasmic-facing; it reads KGAQLIGGPKASILSCAEPLSSALLS. The helical transmembrane segment at 264 to 284 threads the bilayer; that stretch reads LLLLGISFTLPDWLGTLLILS. Residues 285 to 300 are Cytoplasmic-facing; it reads SVILISLDSRRRARAA.

This sequence belongs to the EamA transporter family.

It localises to the cell inner membrane. This is an uncharacterized protein from Salmonella typhimurium (strain LT2 / SGSC1412 / ATCC 700720).